The sequence spans 395 residues: Vascular endothelial growth factor A, long form (395 aa).

Disordered stretches follow at residues 1–45 (MTDR…VEGV) and 73–175 (EAEP…AGPG). Low complexity predominate over residues 73 to 85 (EAEPSGAARSASS). Residues 91-102 (QPEEGEEEEEKE) are compositionally biased toward acidic residues. 2 stretches are compositionally biased toward low complexity: residues 123–143 (AAVC…ARAS) and 165–175 (RRGSASRAGPG). 3 cysteine pairs are disulfide-bonded: cysteine 232/cysteine 274, cysteine 263/cysteine 308, and cysteine 267/cysteine 310. N-linked (GlcNAc...) asparagine glycosylation occurs at asparagine 281. Over residues 314 to 323 (KDRARQEKKS) the composition is skewed to basic and acidic residues. Residues 314–344 (KDRARQEKKSVRGKGKGQKRKRKKSRYKSWS) are disordered. Residues 324–340 (VRGKGKGQKRKRKKSRY) are compositionally biased toward basic residues.

This sequence belongs to the PDGF/VEGF growth factor family. In terms of assembly, homodimer; disulfide-linked. Also found as heterodimer with PGF. Interacts with NRP1. Interacts with isoform 2 of BSG. Interacts with CD82; this interaction inhibits VEGFA-mediated signaling pathway. In terms of processing, produced by use of an alternative upstream CUG codon and post-translationally processed into the N-terminal N-VEGF form and the C-terminal secreted VEGFA form. As to expression, higher expression in pituitary tumors than the pituitary gland. In terms of tissue distribution, widely expressed. Not widely expressed.

Its subcellular location is the cytoplasm. The protein resides in the nucleus. It localises to the secreted. The protein localises to the endoplasmic reticulum. It is found in the golgi apparatus. Its subcellular location is the extracellular space. The protein resides in the extracellular matrix. Participates in the induction of key genes involved in the response to hypoxia and in the induction of angiogenesis such as HIF1A. Involved in protecting cells from hypoxia-mediated cell death. In terms of biological role, growth factor active in angiogenesis, vasculogenesis and endothelial cell growth. Induces endothelial cell proliferation, promotes cell migration, inhibits apoptosis and induces permeabilization of blood vessels. Binds to the FLT1/VEGFR1 and KDR/VEGFR2 receptors, heparan sulfate and heparin. Binds to the NRP1/neuropilin-1 receptor. Binding to NRP1 initiates a signaling pathway needed for motor neuron axon guidance and cell body migration, including for the caudal migration of facial motor neurons from rhombomere 4 to rhombomere 6 during embryonic development. Also binds the DEAR/FBXW7-AS1 receptor. Functionally, binds to the KDR receptor but does not activate downstream signaling pathways, does not activate angiogenesis and inhibits tumor growth. This is Vascular endothelial growth factor A, long form (VEGFA) from Homo sapiens (Human).